The following is a 323-amino-acid chain: MGVLEDLVARAGGCAVIDGGFATQLEALGADINDPLWSAACLITRPHLVKEVHMQYLEAGADVIISSSYQATIPGFIARGMSVAEAEDLLRTSVKLANEARDEFWKSTLRKSKPIYNRALVAASIGSYGAYLADGSEYSGSYGADITAEKLKDFHRRRLQVLASAGPDLIAFEAIPNQMEAQALVELLEEEKVQIPSWICFSSVDGKNLCSGESFADCLKILNASEKVAVVGVNCTPPQFIEGIICEFRKQTKKAIAVYPNSGEVWDGRAKRWLPVECLGHKSFDALAKRWQEAGASLIGGCCRTTPSTIRAVSKILKGRTGH.

One can recognise a Hcy-binding domain in the interval 3–317 (VLEDLVARAG…STIRAVSKIL (315 aa)). The Zn(2+) site is built by Cys235, Cys302, and Cys303.

In terms of assembly, monomer. The cofactor is Zn(2+).

It carries out the reaction S-methyl-L-methionine + L-homocysteine = 2 L-methionine + H(+). In terms of biological role, catalyzes methyl transfer from S-methylmethionine (SMM) to adenosyl-L-homocysteine (AdoMet). SMM degradation (by HMT-1, HMT-2, HMT-3 and HMT-4) and biosynthesis (by MMT1) constitute the SMM cycle in plants, which is probably required to achieve short term control of AdoMet level. The protein is Homocysteine S-methyltransferase 1 (HMT-1) of Zea mays (Maize).